The following is a 465-amino-acid chain: Mitochondrial distribution and morphology protein 10 (465 aa).

The protein belongs to the MDM10 family. As to quaternary structure, component of the ER-mitochondria encounter structure (ERMES) or MDM complex, composed of MMM1, MDM10, MDM12 and MDM34. Associates with the mitochondrial outer membrane sorting assembly machinery SAM(core) complex.

The protein resides in the mitochondrion outer membrane. Functionally, component of the ERMES/MDM complex, which serves as a molecular tether to connect the endoplasmic reticulum and mitochondria. Components of this complex are involved in the control of mitochondrial shape and protein biogenesis and may function in phospholipid exchange. MDM10 is involved in the late assembly steps of the general translocase of the mitochondrial outer membrane (TOM complex). Functions in the TOM40-specific route of the assembly of outer membrane beta-barrel proteins, including the association of TOM40 with the receptor TOM22 and small TOM proteins. Can associate with the SAM(core) complex as well as the MDM12-MMM1 complex, both involved in late steps of the major beta-barrel assembly pathway, that is responsible for biogenesis of all outer membrane beta-barrel proteins. May act as a switch that shuttles between both complexes and channels precursor proteins into the TOM40-specific pathway. Plays a role in mitochondrial morphology and in the inheritance of mitochondria. This Eremothecium gossypii (strain ATCC 10895 / CBS 109.51 / FGSC 9923 / NRRL Y-1056) (Yeast) protein is Mitochondrial distribution and morphology protein 10.